The sequence spans 368 residues: Putative phospho-2-dehydro-3-deoxyheptonate aldolase (368 aa).

This sequence belongs to the class-I DAHP synthase family.

The enzyme catalyses D-erythrose 4-phosphate + phosphoenolpyruvate + H2O = 7-phospho-2-dehydro-3-deoxy-D-arabino-heptonate + phosphate. It participates in metabolic intermediate biosynthesis; chorismate biosynthesis; chorismate from D-erythrose 4-phosphate and phosphoenolpyruvate: step 1/7. Its function is as follows. Stereospecific condensation of phosphoenolpyruvate (PEP) and D-erythrose-4-phosphate (E4P) giving rise to 3-deoxy-D-arabino-heptulosonate-7-phosphate (DAHP). The polypeptide is Putative phospho-2-dehydro-3-deoxyheptonate aldolase (Schizosaccharomyces pombe (strain 972 / ATCC 24843) (Fission yeast)).